The following is a 397-amino-acid chain: Elongation factor Tu (397 aa).

Positions 10 to 206 (KPHVNIGTIG…AVDEAIPTPP (197 aa)) constitute a tr-type G domain. A G1 region spans residues 19–26 (GHIDHGKT). 19–26 (GHIDHGKT) contacts GTP. Thr-26 contacts Mg(2+). Positions 62 to 66 (GITIS) are G2. The tract at residues 83 to 86 (DCPG) is G3. GTP contacts are provided by residues 83 to 87 (DCPGH) and 138 to 141 (NKAD). The segment at 138-141 (NKAD) is G4. Residues 176-178 (SAL) are G5.

The protein belongs to the TRAFAC class translation factor GTPase superfamily. Classic translation factor GTPase family. EF-Tu/EF-1A subfamily. In terms of assembly, monomer.

Its subcellular location is the cytoplasm. It carries out the reaction GTP + H2O = GDP + phosphate + H(+). In terms of biological role, GTP hydrolase that promotes the GTP-dependent binding of aminoacyl-tRNA to the A-site of ribosomes during protein biosynthesis. This is Elongation factor Tu from Kitasatospora aureofaciens (Streptomyces aureofaciens).